Here is a 111-residue protein sequence, read N- to C-terminus: Nucleoid-associated protein lhv_0401 (111 aa).

It belongs to the YbaB/EbfC family. As to quaternary structure, homodimer.

It localises to the cytoplasm. The protein resides in the nucleoid. Functionally, binds to DNA and alters its conformation. May be involved in regulation of gene expression, nucleoid organization and DNA protection. The sequence is that of Nucleoid-associated protein lhv_0401 from Lactobacillus helveticus (strain DPC 4571).